Consider the following 153-residue polypeptide: Small ribosomal subunit protein eS19 (153 aa).

The protein belongs to the eukaryotic ribosomal protein eS19 family. In terms of assembly, part of the 30S ribosomal subunit.

May be involved in maturation of the 30S ribosomal subunit. The sequence is that of Small ribosomal subunit protein eS19 from Aeropyrum pernix (strain ATCC 700893 / DSM 11879 / JCM 9820 / NBRC 100138 / K1).